A 446-amino-acid chain; its full sequence is WD repeat domain phosphoinositide-interacting protein 1 (446 aa).

WD repeat units follow at residues 3-42 (AEAADAPPGGVESALSCFSFNQDCTSLATGTKAGYKLFSL), 47-88 (QLDQ…VYHF), 92-126 (TEICNYSYSSNILSIRLNRQRLLVCLEESIYIHNI), 131-173 (LLKT…LYDG), 177-216 (KTVCTIAAHEGTLAAITFNASGSKLASASEKGTVIRVFSV), 222-261 (LYEFRRGMKRYVTISSLVFSMDSQFLCASSNTETVHIFKL), and 304-343 (FATARLNFSGQRNICTLSTIQKLPRLLVASSSGHLYMYNL). A Nuclear receptor interaction motif is present at residues 131–136 (LLKTLL). A L/FRRG motif motif is present at residues 225–228 (FRRG). A disordered region spans residues 386–406 (ARPSASSASTVPGYSEDGGAL).

This sequence belongs to the WD repeat PROPPIN family. In terms of assembly, interacts with androgen receptor (AR) and the estrogen receptors ESR1 and ESR2. Interacts with WIPI2. Interacts with WDR45. Interacts with ATG16L1. May interact with NUDC. As to expression, ubiquitously expressed. Highly expressed in skeletal muscle, heart, testis, pancreas and placenta. Highly expressed in G361, Sk-mel-28, Sk-mel-13, WM852 and WM451 cells. Up-regulated in a variety of tumor tissues.

It is found in the golgi apparatus. The protein localises to the trans-Golgi network. The protein resides in the endosome. It localises to the cytoplasmic vesicle. Its subcellular location is the clathrin-coated vesicle. It is found in the preautophagosomal structure membrane. The protein localises to the cytoplasm. The protein resides in the cytoskeleton. Functionally, component of the autophagy machinery that controls the major intracellular degradation process by which cytoplasmic materials are packaged into autophagosomes and delivered to lysosomes for degradation. Plays an important role in starvation- and calcium-mediated autophagy, as well as in mitophagy. Functions downstream of the ULK1 and PI3-kinases that produce phosphatidylinositol 3-phosphate (PtdIns3P) on membranes of the endoplasmic reticulum once activated. Binds phosphatidylinositol 3-phosphate (PtdIns3P), and maybe other phosphoinositides including PtdIns3,5P2 and PtdIns5P, and is recruited to phagophore assembly sites at the endoplasmic reticulum membranes. There, it assists WIPI2 in the recruitment of ATG12-ATG5-ATG16L1, a complex that directly controls the elongation of the nascent autophagosomal membrane. Together with WDR45/WIPI4, promotes ATG2 (ATG2A or ATG2B)-mediated lipid transfer by enhancing ATG2-association with phosphatidylinositol 3-monophosphate (PI3P)-containing membranes. Involved in xenophagy of Staphylococcus aureus. Invading S.aureus cells become entrapped in autophagosome-like WIPI1 positive vesicles targeted for lysosomal degradation. Also plays a distinct role in controlling the transcription of melanogenic enzymes and melanosome maturation, a process that is distinct from starvation-induced autophagy. May also regulate the trafficking of proteins involved in the mannose-6-phosphate receptor (MPR) recycling pathway. This is WD repeat domain phosphoinositide-interacting protein 1 (WIPI1) from Homo sapiens (Human).